The following is a 437-amino-acid chain: Vasoactive intestinal polypeptide receptor 2 (437 aa).

The N-terminal stretch at 1–22 (MRASVVLTCYCWLLVRVSSIHP) is a signal peptide. Topologically, residues 23–123 (ECRFHLEIQE…EDESKITFYI (101 aa)) are extracellular. Cystine bridges form between C37–C60, C51–C92, and C74–C108. N-linked (GlcNAc...) asparagine glycosylation is found at N57, N87, and N91. Residues 124–149 (LVKAIYTLGYSVSLMSLTTGSIIICL) traverse the membrane as a helical segment. Over 150–157 (FRKLHCTR) the chain is Cytoplasmic. The chain crosses the membrane as a helical span at residues 158–179 (NYIHLNLFLSFMLRAISVLVKD). At 180 to 202 (SVLYSSSGTLRCHDQPGSWVGCK) the chain is on the extracellular side. C201 and C270 are oxidised to a cystine. Residues 203–227 (LSLVFFQYCIMANFYWLLVEGLYLH) form a helical membrane-spanning segment. Over 228–238 (TLLVAILPPSR) the chain is Cytoplasmic. The helical transmembrane segment at 239 to 260 (CFLAYLLIGWGIPSVCIGAWIA) threads the bilayer. Over 261-279 (TRLSLEDTGCWDTNDHSIP) the chain is Extracellular. A helical membrane pass occupies residues 280–303 (WWVIRMPILISIVVNFALFISIVR). Residues 304–324 (ILLQKLTSPDVGGNDQSQYKR) lie on the Cytoplasmic side of the membrane. A helical membrane pass occupies residues 325–345 (LAKSTLLLIPLFGVHYMVFAA). At 346 to 353 (FPIGISST) the chain is on the extracellular side. Residues 354-377 (YQILFELCVGSFQGLVVAVLYCFL) form a helical membrane-spanning segment. At 378 to 437 (NSEVQCELKRRWRGLCLTQPGSRDYRLHSWSMSRNGSESALQIHRGSRTQSFLQSETSVI) the chain is on the cytoplasmic side.

Belongs to the G-protein coupled receptor 2 family. In terms of assembly, interacts with ADCYAP1/PACAP (via N-terminal extracellular domain); activated by PACAP27 and CAPAC38 neuropeptides. Interacts with VIP; the interaction results in VIPR1 activation. In terms of tissue distribution, mainly in the thalamus, hippocampus and in the suprachiasmatic nucleus.

It is found in the cell membrane. Its function is as follows. G protein-coupled receptor activated by the neuropeptides vasoactive intestinal peptide (VIP) and pituitary adenylate cyclase-activating polypeptide (ADCYAP1/PACAP). Binds VIP and both PACAP27 and PACAP38 bioactive peptides with the order of ligand affinity of VIP = PACAP38 &gt; PACAP27. Ligand binding causes a conformation change that triggers signaling via guanine nucleotide-binding proteins (G proteins) and modulates the activity of downstream effectors. Activates cAMP-dependent pathway. May be coupled to phospholipase C. This chain is Vasoactive intestinal polypeptide receptor 2, found in Rattus norvegicus (Rat).